Reading from the N-terminus, the 157-residue chain is Succinate dehydrogenase [ubiquinone] cytochrome b small subunit, mitochondrial (157 aa).

The transit peptide at methionine 1–glutamine 45 directs the protein to the mitochondrion. At serine 46–serine 61 the chain is on the mitochondrial matrix side. The chain crosses the membrane as a helical span at residues leucine 62 to leucine 83. Over tyrosine 84–alanine 88 the chain is Mitochondrial intermembrane. Residues valine 89–isoleucine 109 form a helical membrane-spanning segment. Histidine 100 serves as a coordination point for heme b. The Mitochondrial matrix segment spans residues threonine 110 to proline 118. Tyrosine 112 contributes to the a ubiquinone binding site. A helical membrane pass occupies residues isoleucine 119–phenylalanine 140. The Mitochondrial intermembrane segment spans residues asparagine 141–isoleucine 157.

Belongs to the CybS family. As to quaternary structure, component of complex II composed of four subunits: the flavoprotein (FP) SDHA, iron-sulfur protein (IP) SDHB, and a cytochrome b560 composed of SDHC and SDHD.

Its subcellular location is the mitochondrion inner membrane. The protein operates within carbohydrate metabolism; tricarboxylic acid cycle. Membrane-anchoring subunit of succinate dehydrogenase (SDH) that is involved in complex II of the mitochondrial electron transport chain and is responsible for transferring electrons from succinate to ubiquinone (coenzyme Q). SDH also oxidizes malate to the non-canonical enol form of oxaloacetate, enol-oxaloacetate. Enol-oxaloacetate, which is a potent inhibitor of the succinate dehydrogenase activity, is further isomerized into keto-oxaloacetate. This chain is Succinate dehydrogenase [ubiquinone] cytochrome b small subunit, mitochondrial (SDHD), found in Gallus gallus (Chicken).